The chain runs to 759 residues: 5-methyltetrahydropteroyltriglutamate--homocysteine methyltransferase (759 aa).

The span at 1–16 (MTQPVRRQPFTATITG) shows a compositional bias: polar residues. The segment at 1–22 (MTQPVRRQPFTATITGSPRIGP) is disordered. Residues 24 to 27 (RELK) and Lys-118 each bind 5-methyltetrahydropteroyltri-L-glutamate. Residues 437–439 (IGS) and Glu-490 contribute to the L-homocysteine site. L-methionine is bound by residues 437–439 (IGS) and Glu-490. Residues 521–522 (RC) and Trp-567 contribute to the 5-methyltetrahydropteroyltri-L-glutamate site. Asp-605 lines the L-homocysteine pocket. L-methionine is bound at residue Asp-605. 5-methyltetrahydropteroyltri-L-glutamate is bound at residue Glu-611. Residues His-647, Cys-649, and Glu-671 each contribute to the Zn(2+) site. The active-site Proton donor is the His-700. Residue Cys-732 coordinates Zn(2+).

This sequence belongs to the vitamin-B12 independent methionine synthase family. It depends on Zn(2+) as a cofactor.

The catalysed reaction is 5-methyltetrahydropteroyltri-L-glutamate + L-homocysteine = tetrahydropteroyltri-L-glutamate + L-methionine. The protein operates within amino-acid biosynthesis; L-methionine biosynthesis via de novo pathway; L-methionine from L-homocysteine (MetE route): step 1/1. In terms of biological role, catalyzes the transfer of a methyl group from 5-methyltetrahydrofolate to homocysteine resulting in methionine formation. This is 5-methyltetrahydropteroyltriglutamate--homocysteine methyltransferase from Mycobacterium tuberculosis (strain ATCC 25177 / H37Ra).